A 305-amino-acid polypeptide reads, in one-letter code: Glycerol-3-phosphate dehydrogenase [NAD(P)+] (305 aa).

3 residues coordinate NADPH: phenylalanine 10, arginine 29, and lysine 87. 3 residues coordinate sn-glycerol 3-phosphate: lysine 87, glycine 115, and serine 117. Alanine 119 contributes to the NADPH binding site. Sn-glycerol 3-phosphate is bound by residues lysine 170, aspartate 223, serine 233, arginine 234, and asparagine 235. Lysine 170 serves as the catalytic Proton acceptor. NADPH is bound at residue arginine 234. Glutamate 255 serves as a coordination point for NADPH.

It belongs to the NAD-dependent glycerol-3-phosphate dehydrogenase family.

Its subcellular location is the cytoplasm. The enzyme catalyses sn-glycerol 3-phosphate + NAD(+) = dihydroxyacetone phosphate + NADH + H(+). It catalyses the reaction sn-glycerol 3-phosphate + NADP(+) = dihydroxyacetone phosphate + NADPH + H(+). The protein operates within membrane lipid metabolism; glycerophospholipid metabolism. Functionally, catalyzes the reduction of the glycolytic intermediate dihydroxyacetone phosphate (DHAP) to sn-glycerol 3-phosphate (G3P), the key precursor for phospholipid synthesis. The protein is Glycerol-3-phosphate dehydrogenase [NAD(P)+] of Cereibacter sphaeroides (strain ATCC 17023 / DSM 158 / JCM 6121 / CCUG 31486 / LMG 2827 / NBRC 12203 / NCIMB 8253 / ATH 2.4.1.) (Rhodobacter sphaeroides).